A 168-amino-acid chain; its full sequence is Signal peptidase complex catalytic subunit SEC11 (168 aa).

Residues 1–12 (MNLRLELTRFLN) are Cytoplasmic-facing. The helical; Signal-anchor for type II membrane protein transmembrane segment at 13 to 30 (LCFALASAFMFWKGLSIV) threads the bilayer. Residues 31–168 (TNSHSPIVVV…IALSALLSNE (138 aa)) lie on the Lumenal side of the membrane. Residues Ser-44, His-83, and Asp-110 each act as charge relay system in the active site. A C-terminal short (CTS) helix region spans residues 154–165 (GLMGLIALSALL).

Belongs to the peptidase S26B family. In terms of assembly, component of the signal peptidase complex (SPC) composed of a catalytic subunit SEC11 and three accessory subunits SPC1, SPC2 and SPC3. The complex induces a local thinning of the ER membrane which is used to measure the length of the signal peptide (SP) h-region of protein substrates. This ensures the selectivity of the complex towards h-regions shorter than 18-20 amino acids. SPC associates with the translocon complex.

The protein localises to the endoplasmic reticulum membrane. It carries out the reaction Cleavage of hydrophobic, N-terminal signal or leader sequences from secreted and periplasmic proteins.. Functionally, catalytic component of the signal peptidase complex (SPC) which catalyzes the cleavage of N-terminal signal sequences from nascent proteins as they are translocated into the lumen of the endoplasmic reticulum. Specifically cleaves N-terminal signal peptides that contain a hydrophobic alpha-helix (h-region) shorter than 18-20 amino acids. In Lachancea thermotolerans (strain ATCC 56472 / CBS 6340 / NRRL Y-8284) (Yeast), this protein is Signal peptidase complex catalytic subunit SEC11 (SEC11).